The sequence spans 358 residues: tRNA-specific 2-thiouridylase MnmA (358 aa).

ATP is bound by residues 8-15 and methionine 35; that span reads AMSGGVDS. Positions 95–97 are interaction with target base in tRNA; sequence NPD. Catalysis depends on cysteine 100, which acts as the Nucleophile. Cysteines 100 and 194 form a disulfide. Glycine 124 lines the ATP pocket. Positions 144–146 are interaction with tRNA; sequence KDQ. Residue cysteine 194 is the Cysteine persulfide intermediate of the active site. Residues 301 to 302 are interaction with tRNA; that stretch reads RY.

This sequence belongs to the MnmA/TRMU family.

It localises to the cytoplasm. It catalyses the reaction S-sulfanyl-L-cysteinyl-[protein] + uridine(34) in tRNA + AH2 + ATP = 2-thiouridine(34) in tRNA + L-cysteinyl-[protein] + A + AMP + diphosphate + H(+). Functionally, catalyzes the 2-thiolation of uridine at the wobble position (U34) of tRNA, leading to the formation of s(2)U34. This is tRNA-specific 2-thiouridylase MnmA from Chlamydia trachomatis serovar D (strain ATCC VR-885 / DSM 19411 / UW-3/Cx).